Reading from the N-terminus, the 344-residue chain is Protein RecA (344 aa).

66–73 provides a ligand contact to ATP; it reads GPESSGKT.

The protein belongs to the RecA family.

It is found in the cytoplasm. Can catalyze the hydrolysis of ATP in the presence of single-stranded DNA, the ATP-dependent uptake of single-stranded DNA by duplex DNA, and the ATP-dependent hybridization of homologous single-stranded DNAs. It interacts with LexA causing its activation and leading to its autocatalytic cleavage. The protein is Protein RecA of Methylobacillus flagellatus.